The following is a 636-amino-acid chain: Chaperone protein HtpG (636 aa).

The tract at residues 1 to 345 (MSESATANAN…SSDLPLNVSR (345 aa)) is a; substrate-binding. Positions 346-562 (EILQQSKDID…EHDPSGNLAR (217 aa)) are b. Residues 563 to 636 (LMKAAGQPMP…NDLMMALSAK (74 aa)) are c.

The protein belongs to the heat shock protein 90 family. As to quaternary structure, homodimer.

It is found in the cytoplasm. Functionally, molecular chaperone. Has ATPase activity. The polypeptide is Chaperone protein HtpG (Dechloromonas aromatica (strain RCB)).